Reading from the N-terminus, the 296-residue chain is N-acetylmuramic acid 6-phosphate etherase (296 aa).

The SIS domain occupies 54–217 (VIASFQQGGR…STTAMVGIGK (164 aa)). Glutamate 82 (proton donor) is an active-site residue. Glutamate 113 is an active-site residue.

Belongs to the GCKR-like family. MurNAc-6-P etherase subfamily. As to quaternary structure, homodimer.

It catalyses the reaction N-acetyl-D-muramate 6-phosphate + H2O = N-acetyl-D-glucosamine 6-phosphate + (R)-lactate. Its pathway is amino-sugar metabolism; N-acetylmuramate degradation. Functionally, specifically catalyzes the cleavage of the D-lactyl ether substituent of MurNAc 6-phosphate, producing GlcNAc 6-phosphate and D-lactate. This Shouchella clausii (strain KSM-K16) (Alkalihalobacillus clausii) protein is N-acetylmuramic acid 6-phosphate etherase.